The primary structure comprises 638 residues: Gamma-aminobutyric acid receptor subunit theta (638 aa).

A signal peptide spans 1-21 (MGIRGMLRAAALLLLIRTWLA). The Extracellular portion of the chain corresponds to 22-267 (ESNGPSPTPK…FQVQREVRSY (246 aa)). N-linked (GlcNAc...) asparagine glycosylation occurs at asparagine 127. A disulfide bridge links cysteine 183 with cysteine 197. The helical transmembrane segment at 268–288 (LVQVYWPTVLTTILSWISFWM) threads the bilayer. Residues 289–296 (NYDSSAAR) are Cytoplasmic-facing. A helical membrane pass occupies residues 297 to 314 (VTIGLTSILVLTTIDSHM). Topologically, residues 315–325 (RDKLPHISCIK) are extracellular. A helical membrane pass occupies residues 326–346 (AIDIYILVCLFFVFLSLLEYV). Topologically, residues 347–617 (YINYLFFSQV…NRVPKVDRWS (271 aa)) are cytoplasmic. Positions 491–515 (ACDDEDSEESLSSEESHGHGSSHTG) are disordered. The span at 492-502 (CDDEDSEESLS) shows a compositional bias: acidic residues. A helical membrane pass occupies residues 618-638 (RFLFPLSFGLFNVVYWLYHVY).

It belongs to the ligand-gated ion channel (TC 1.A.9) family. Gamma-aminobutyric acid receptor (TC 1.A.9.5) subfamily. GABRQ sub-subfamily. In terms of assembly, heteropentamer, formed by a combination of alpha (GABRA1-6), beta (GABRB1-3), gamma (GABRG1-3), delta (GABRD), epsilon (GABRE), rho (GABRR1-3), pi (GABRP) and theta (GABRQ) chains, each subunit exhibiting distinct physiological and pharmacological properties. As to expression, expressed in brain, lung, and spleen.

It localises to the postsynaptic cell membrane. The protein localises to the cell membrane. The enzyme catalyses chloride(in) = chloride(out). Potentiated by etomidate, propofol, pregnanolone and pentobarbital. Its function is as follows. Theta subunit of the heteropentameric ligand-gated chloride channel gated by gamma-aminobutyric acid (GABA), a major inhibitory neurotransmitter in the brain. GABA-gated chloride channels, also named GABA(A) receptors (GABAAR), consist of five subunits arranged around a central pore and contain GABA active binding site(s) located at the alpha and beta subunit interfaces. When activated by GABA, GABAARs selectively allow the flow of chloride anions across the cell membrane down their electrochemical gradient. This chain is Gamma-aminobutyric acid receptor subunit theta, found in Mus musculus (Mouse).